A 483-amino-acid chain; its full sequence is tRNA sulfurtransferase (483 aa).

Positions 61–165 (EAVCDALTRI…DDKLILVNAR (105 aa)) constitute a THUMP domain. Residues 183-184 (LI), lysine 265, glycine 287, and glutamine 296 each bind ATP. A disulfide bridge connects residues cysteine 344 and cysteine 456. The Rhodanese domain occupies 404 to 483 (FATNDVVLDI…FNNVKVYRKK (80 aa)). Cysteine 456 serves as the catalytic Cysteine persulfide intermediate.

Belongs to the ThiI family.

It is found in the cytoplasm. It catalyses the reaction [ThiI sulfur-carrier protein]-S-sulfanyl-L-cysteine + a uridine in tRNA + 2 reduced [2Fe-2S]-[ferredoxin] + ATP + H(+) = [ThiI sulfur-carrier protein]-L-cysteine + a 4-thiouridine in tRNA + 2 oxidized [2Fe-2S]-[ferredoxin] + AMP + diphosphate. The catalysed reaction is [ThiS sulfur-carrier protein]-C-terminal Gly-Gly-AMP + S-sulfanyl-L-cysteinyl-[cysteine desulfurase] + AH2 = [ThiS sulfur-carrier protein]-C-terminal-Gly-aminoethanethioate + L-cysteinyl-[cysteine desulfurase] + A + AMP + 2 H(+). Its pathway is cofactor biosynthesis; thiamine diphosphate biosynthesis. Functionally, catalyzes the ATP-dependent transfer of a sulfur to tRNA to produce 4-thiouridine in position 8 of tRNAs, which functions as a near-UV photosensor. Also catalyzes the transfer of sulfur to the sulfur carrier protein ThiS, forming ThiS-thiocarboxylate. This is a step in the synthesis of thiazole, in the thiamine biosynthesis pathway. The sulfur is donated as persulfide by IscS. The chain is tRNA sulfurtransferase from Proteus mirabilis (strain HI4320).